We begin with the raw amino-acid sequence, 353 residues long: Uroporphyrinogen decarboxylase (353 aa).

Residues 27–31 (RQAGR), phenylalanine 46, aspartate 76, tyrosine 152, serine 207, and histidine 321 each bind substrate.

This sequence belongs to the uroporphyrinogen decarboxylase family. In terms of assembly, homodimer.

Its subcellular location is the cytoplasm. It catalyses the reaction uroporphyrinogen III + 4 H(+) = coproporphyrinogen III + 4 CO2. Its pathway is porphyrin-containing compound metabolism; protoporphyrin-IX biosynthesis; coproporphyrinogen-III from 5-aminolevulinate: step 4/4. Its function is as follows. Catalyzes the decarboxylation of four acetate groups of uroporphyrinogen-III to yield coproporphyrinogen-III. This is Uroporphyrinogen decarboxylase from Listeria monocytogenes serotype 4b (strain F2365).